The following is a 177-amino-acid chain: Large ribosomal subunit protein uL6 (177 aa).

Belongs to the universal ribosomal protein uL6 family. As to quaternary structure, part of the 50S ribosomal subunit.

Functionally, this protein binds to the 23S rRNA, and is important in its secondary structure. It is located near the subunit interface in the base of the L7/L12 stalk, and near the tRNA binding site of the peptidyltransferase center. In Rickettsia felis (strain ATCC VR-1525 / URRWXCal2) (Rickettsia azadi), this protein is Large ribosomal subunit protein uL6.